Here is a 176-residue protein sequence, read N- to C-terminus: Large ribosomal subunit protein eL20 (176 aa).

Lys-11 is covalently cross-linked (Glycyl lysine isopeptide (Lys-Gly) (interchain with G-Cter in SUMO2)). A Phosphotyrosine modification is found at Tyr-63. Ser-71 is modified (phosphoserine). Lys-76 is subject to N6-succinyllysine. The residue at position 123 (Ser-123) is a Phosphoserine. Glycyl lysine isopeptide (Lys-Gly) (interchain with G-Cter in SUMO2) cross-links involve residues Lys-128 and Lys-170.

It belongs to the eukaryotic ribosomal protein eL20 family. In terms of assembly, component of the large ribosomal subunit. Binds IPO9 with high affinity.

Its subcellular location is the cytoplasm. Functionally, component of the large ribosomal subunit. The ribosome is a large ribonucleoprotein complex responsible for the synthesis of proteins in the cell. This chain is Large ribosomal subunit protein eL20 (RPL18A), found in Bos taurus (Bovine).